The sequence spans 134 residues: MGKDTIADIITSIRNADMNRKGTVRIGSTNITESIVKILLREGFIENVRKHRENTQDFLILTLRHRRNKKESYKTIFNLKRISRPGLRIYSNSQRITRILGGIGIVILSTSRGIMTDREARLKRVGGEILCYIW.

The protein belongs to the universal ribosomal protein uS8 family. Part of the 30S ribosomal subunit.

It is found in the plastid. The protein localises to the chloroplast. Functionally, one of the primary rRNA binding proteins, it binds directly to 16S rRNA central domain where it helps coordinate assembly of the platform of the 30S subunit. This Aethionema grandiflorum (Persian stone-cress) protein is Small ribosomal subunit protein uS8c (rps8).